The following is a 588-amino-acid chain: Aspartate--tRNA ligase (588 aa).

Glu-174 contacts L-aspartate. Residues 198-201 (QLFK) form an aspartate region. Arg-220 serves as a coordination point for L-aspartate. ATP is bound by residues 220–222 (RDE) and Gln-229. His-448 provides a ligand contact to L-aspartate. Glu-482 is a binding site for ATP. An L-aspartate-binding site is contributed by Arg-489. 534–537 (GIDR) serves as a coordination point for ATP.

Belongs to the class-II aminoacyl-tRNA synthetase family. Type 1 subfamily. As to quaternary structure, homodimer.

Its subcellular location is the cytoplasm. It catalyses the reaction tRNA(Asp) + L-aspartate + ATP = L-aspartyl-tRNA(Asp) + AMP + diphosphate. In terms of biological role, catalyzes the attachment of L-aspartate to tRNA(Asp) in a two-step reaction: L-aspartate is first activated by ATP to form Asp-AMP and then transferred to the acceptor end of tRNA(Asp). The polypeptide is Aspartate--tRNA ligase (Xanthomonas oryzae pv. oryzae (strain PXO99A)).